Here is a 97-residue protein sequence, read N- to C-terminus: Co-chaperonin GroES (97 aa).

Belongs to the GroES chaperonin family. Heptamer of 7 subunits arranged in a ring. Interacts with the chaperonin GroEL.

Its subcellular location is the cytoplasm. In terms of biological role, together with the chaperonin GroEL, plays an essential role in assisting protein folding. The GroEL-GroES system forms a nano-cage that allows encapsulation of the non-native substrate proteins and provides a physical environment optimized to promote and accelerate protein folding. GroES binds to the apical surface of the GroEL ring, thereby capping the opening of the GroEL channel. The chain is Co-chaperonin GroES from Enterobacter sp. (strain 638).